The sequence spans 302 residues: Ribosomal RNA small subunit methyltransferase A (302 aa).

S-adenosyl-L-methionine is bound by residues Asn-27, Leu-29, Gly-54, Glu-75, Asp-100, and Asn-138.

This sequence belongs to the class I-like SAM-binding methyltransferase superfamily. rRNA adenine N(6)-methyltransferase family. RsmA subfamily.

It localises to the cytoplasm. The enzyme catalyses adenosine(1518)/adenosine(1519) in 16S rRNA + 4 S-adenosyl-L-methionine = N(6)-dimethyladenosine(1518)/N(6)-dimethyladenosine(1519) in 16S rRNA + 4 S-adenosyl-L-homocysteine + 4 H(+). Functionally, specifically dimethylates two adjacent adenosines (A1518 and A1519) in the loop of a conserved hairpin near the 3'-end of 16S rRNA in the 30S particle. May play a critical role in biogenesis of 30S subunits. This is Ribosomal RNA small subunit methyltransferase A from Natranaerobius thermophilus (strain ATCC BAA-1301 / DSM 18059 / JW/NM-WN-LF).